We begin with the raw amino-acid sequence, 167 residues long: tRNA-specific adenosine deaminase (167 aa).

Residues 6–117 form the CMP/dCMP-type deaminase domain; sequence FSHEYWMRHA…DAKTGAAGSL (112 aa). His57 is a binding site for Zn(2+). The active-site Proton donor is Glu59. Zn(2+) contacts are provided by Cys87 and Cys90.

Belongs to the cytidine and deoxycytidylate deaminase family. In terms of assembly, homodimer. It depends on Zn(2+) as a cofactor.

It carries out the reaction adenosine(34) in tRNA + H2O + H(+) = inosine(34) in tRNA + NH4(+). Functionally, catalyzes the deamination of adenosine to inosine at the wobble position 34 of tRNA(Arg2). Essential for cell viability. The protein is tRNA-specific adenosine deaminase of Escherichia coli (strain K12).